We begin with the raw amino-acid sequence, 308 residues long: Mannan endo-1,4-beta-mannosidase (308 aa).

Glu125 acts as the Proton donor in catalysis. Residue Glu220 is the Nucleophile of the active site. The disordered stretch occupies residues 284-308 (DGLQETSKPSTVFTDDNGGHPEPPT). A compositionally biased stretch (polar residues) spans 287-297 (QETSKPSTVFT).

Belongs to the glycosyl hydrolase 5 (cellulase A) family.

The catalysed reaction is Random hydrolysis of (1-&gt;4)-beta-D-mannosidic linkages in mannans, galactomannans and glucomannans.. Its function is as follows. Catalyzes the endo hydrolysis of beta-1,4-linked mannan, galactomannan and glucomannan. It is able to hydrolyze mannosidic linkages that are flanked by mannose or glucose. The chain is Mannan endo-1,4-beta-mannosidase from Salipaludibacillus agaradhaerens (Bacillus agaradhaerens).